We begin with the raw amino-acid sequence, 53 residues long: Lantibiotic mutacin-2 (53 aa).

Positions 1 to 26 (MNKLNSNAVVSLNEVSDSELDTILGG) are excised as a propeptide. The segment at residues 36 to 41 (TVSYEC) is a cross-link (beta-methyllanthionine (Thr-Cys)). 2 consecutive cross-links (lanthionine (Ser-Cys)) follow at residues 38–52 (SYEC…VFTC) and 45–53 (SWQHVFTCC). The residue at position 51 (Thr-51) is a 2,3-didehydrobutyrine.

Post-translationally, maturation of lantibiotics involves the enzymatic conversion of Thr, and Ser into dehydrated AA and the formation of thioether bonds with cysteine. This is followed by membrane translocation and cleavage of the modified precursor. It is not established whether the 2,3-didehydrobutyrine is the E- or Z-isomer.

Its function is as follows. Lanthionine-containing peptide antibiotic (lantibiotic) active on Gram-positive bacteria including M.luteus, S.aureus, Streptococcus, P.micros, P.acidilactici, C.sporogenes, C.diphtheriae, A.viscosus, G.vaginalis, P.acnes, L.monocytogenes and M.smegmatis, and Gram-negative bacteria including C.jejuni, H.pylori and N.gonorrhoeae. Transiently and partially depolarizes the transmembrane electrical potential and pH gradient of susceptible cells, inhibits the uptake of amino acids and depletes the intracellular ATP pool. The protein is Lantibiotic mutacin-2 of Streptococcus mutans.